Reading from the N-terminus, the 387-residue chain is Monopolar spindle protein 2 (387 aa).

Residues 117-232 (MNLNSPSKFL…NSSRTSDPGS (116 aa)) adopt a coiled-coil conformation. The interval 216 to 235 (RQVEDNQNSSRTSDPGSPLV) is disordered. The span at 220 to 230 (DNQNSSRTSDP) shows a compositional bias: polar residues. The chain crosses the membrane as a helical span at residues 311 to 327 (IRIIVCFALLAGVLPYI).

Belongs to the MPS2 family. As to quaternary structure, interacts with BBP1, MPS3, and SPC24.

It is found in the nucleus membrane. Its subcellular location is the cytoplasm. It localises to the cytoskeleton. The protein localises to the microtubule organizing center. The protein resides in the spindle pole body. Component of the spindle pole body (SPB) required for insertion of the nascent SPB into the nuclear envelope and for the proper execution of spindle pole body (SPB) duplication. In Saccharomyces cerevisiae (strain ATCC 204508 / S288c) (Baker's yeast), this protein is Monopolar spindle protein 2 (MPS2).